We begin with the raw amino-acid sequence, 200 residues long: Probable molybdenum cofactor guanylyltransferase (200 aa).

Residues 9–11 (LAG), Lys21, Asp69, and Asp100 contribute to the GTP site. Asp100 serves as a coordination point for Mg(2+).

Belongs to the MobA family. Requires Mg(2+) as cofactor.

It is found in the cytoplasm. It catalyses the reaction Mo-molybdopterin + GTP + H(+) = Mo-molybdopterin guanine dinucleotide + diphosphate. Its function is as follows. Transfers a GMP moiety from GTP to Mo-molybdopterin (Mo-MPT) cofactor (Moco or molybdenum cofactor) to form Mo-molybdopterin guanine dinucleotide (Mo-MGD) cofactor. This is Probable molybdenum cofactor guanylyltransferase from Bacillus cereus (strain AH187).